The chain runs to 370 residues: Protein-tyrosine sulfotransferase 1 (370 aa).

At 1–8 the chain is on the cytoplasmic side; the sequence is MVGKLKQN. A helical; Signal-anchor for type II membrane protein membrane pass occupies residues 9–25; sequence LLLACLVISSVTVFYLG. Over 26-370 the chain is Lumenal; sequence QHAMECHHRI…KEKPQTEQVE (345 aa). A glycan (N-linked (GlcNAc...) asparagine) is linked at N60. Position 79-83 (79-83) interacts with 3'-phosphoadenylyl sulfate; it reads RSGTT. C97 and C157 are joined by a disulfide. E100 acts as the Proton donor/acceptor in catalysis. The interaction with peptide substrate stretch occupies residues 102-106; it reads RVIPR. 3'-phosphoadenylyl sulfate-binding residues include R184, S192, and R196. A disulfide bond links C226 and C234. Y239 serves as a coordination point for 3'-phosphoadenylyl sulfate. N-linked (GlcNAc...) asparagine glycosylation is present at N262. Residues 286–295 and K301 contribute to the 3'-phosphoadenylyl sulfate site; that span reads STDQVIKPVN.

Belongs to the protein sulfotransferase family. As to quaternary structure, homodimer. Can also form heterodimers with TPST2. In terms of processing, N-glycosylated.

It is found in the golgi apparatus membrane. The catalysed reaction is L-tyrosyl-[protein] + 3'-phosphoadenylyl sulfate = O-sulfo-L-tyrosine-[protein] + adenosine 3',5'-bisphosphate + H(+). Functionally, catalyzes the O-sulfation of tyrosine residues within acidic motifs of polypeptides, using 3'-phosphoadenylyl sulfate (PAPS) as cosubstrate. The protein is Protein-tyrosine sulfotransferase 1 (Tpst1) of Rattus norvegicus (Rat).